The chain runs to 400 residues: Plasminogen activator inhibitor 1 (400 aa).

Positions 1 to 21 (MQMSTVCLALGLALVFGEASA) are cleaved as a signal peptide. Residues Asn-230, Asn-286, and Asn-350 are each glycosylated (N-linked (GlcNAc...) asparagine).

Belongs to the serpin family. Forms a heterodimer with TMPRSS7. Interacts with VTN. Binds LRP1B; binding is followed by internalization and degradation. Interacts with PPP1CB. In complex with PLAU/uPA, interacts with PLAUR/uPAR. Interacts with SORL1 and LRP1, either alone or in complex with PLAU; these interactions are abolished in the presence of LRPAP1/RAP. The ternary complex composed of PLAUR-PLAU-PAI1 also interacts with SORL1. Interacts with PLAT/tPA. Also interacts with SORL1, when complexed to PLAT/tPA.

It localises to the secreted. Its function is as follows. Serine protease inhibitor. Inhibits TMPRSS7. Is a primary inhibitor of tissue-type plasminogen activator (PLAT) and urokinase-type plasminogen activator (PLAU). As PLAT inhibitor, it is required for fibrinolysis down-regulation and is responsible for the controlled degradation of blood clots. As PLAU inhibitor, it is involved in the regulation of cell adhesion and spreading. Acts as a regulator of cell migration, independently of its role as protease inhibitor. It is required for stimulation of keratinocyte migration during cutaneous injury repair. It is involved in cellular and replicative senescence. Plays a role in alveolar type 2 cells senescence in the lung. Is involved in the regulation of cementogenic differentiation of periodontal ligament stem cells, and regulates odontoblast differentiation and dentin formation during odontogenesis. In Neovison vison (American mink), this protein is Plasminogen activator inhibitor 1 (SERPINE1).